A 534-amino-acid chain; its full sequence is UDP-glucuronosyltransferase 1A3 (534 aa).

The signal sequence occupies residues 1 to 28 (MATGLQVPLPWLATGLLLLLSVQPWAES). N-linked (GlcNAc...) asparagine glycosylation is found at asparagine 119, asparagine 142, asparagine 296, and asparagine 348. A helical transmembrane segment spans residues 492–508 (VIGFLLAVVLTVAFITF).

The protein belongs to the UDP-glycosyltransferase family. As to quaternary structure, homodimer. Homooligomer. Interacts with UGT1A1, UGT1A4, UGT1A6, UGT1A7, UGT1A8, UGT1A9 and UGT1A10 to form heterodimers. Isoform 1 interacts with isoform 2/i2 suggesting that oligomerization is involved in negative regulation of transferase activity by isoform 2. Isoform 1 also interacts with respective i2 isoforms of UGT1A1, UGT1A4, UGT1A6, UGT1A7, UGT1A8, UGT1A9 and UGT1A10. Expressed in liver, kidney, colon, esophagus and small intestine. As to expression, expressed in liver, kidney and colon. Not expressed in esophagus and small intestine.

Its subcellular location is the endoplasmic reticulum membrane. It carries out the reaction glucuronate acceptor + UDP-alpha-D-glucuronate = acceptor beta-D-glucuronoside + UDP + H(+). The enzyme catalyses 17beta-estradiol + UDP-alpha-D-glucuronate = 17beta-estradiol 3-O-(beta-D-glucuronate) + UDP + H(+). It catalyses the reaction 17beta-estradiol + UDP-alpha-D-glucuronate = 17beta-estradiol 17-O-(beta-D-glucuronate) + UDP + H(+). The catalysed reaction is 17alpha-estradiol + UDP-alpha-D-glucuronate = 17alpha-estradiol 3-O-(beta-D-glucuronate) + UDP + H(+). It carries out the reaction estrone + UDP-alpha-D-glucuronate = estrone 3-O-(beta-D-glucuronate) + UDP + H(+). The enzyme catalyses chenodeoxycholate + UDP-alpha-D-glucuronate = chenodeoxycholoyl-24-O-(beta-D-glucuronate) + UDP. It catalyses the reaction deoxycholate + UDP-alpha-D-glucuronate = deoxycholoyl-24-O-(beta-D-glucuronate) + UDP. The catalysed reaction is lithocholate + UDP-alpha-D-glucuronate = lithocholoyl-24-O-(beta-D-glucuronate) + UDP. It carries out the reaction hyodeoxycholate + UDP-alpha-D-glucuronate = hyodeoxycholoyl-24-O-(beta-D-glucuronate) + UDP. The enzyme catalyses hyocholate + UDP-alpha-D-glucuronate = hyocholoyl-24-O-(beta-D-glucuronate) + UDP. It catalyses the reaction calcidiol + UDP-alpha-D-glucuronate = calcidiol 25-O-(beta-D-glucuronide) + UDP + H(+). The catalysed reaction is (E)-ferulate + UDP-alpha-D-glucuronate = (E)-4-O-(beta-D-glucuronosyl)-ferulate + UDP + H(+). It carries out the reaction (E)-ferulate + UDP-alpha-D-glucuronate = (E)-ferulic acid beta-D-glucuronate ester + UDP. The enzyme catalyses losartan + UDP-alpha-D-glucuronate = losartan-2-N-beta-D-glucuronide + UDP. It catalyses the reaction candesartan + UDP-alpha-D-glucuronate = candesartan-2-N-beta-D-glucuronide + UDP. The catalysed reaction is zolasartan + UDP-alpha-D-glucuronate = zolarsartan-2-N-beta-D-glucuronide + UDP. In terms of biological role, UDP-glucuronosyltransferase (UGT) that catalyzes phase II biotransformation reactions in which lipophilic substrates are conjugated with glucuronic acid to increase the metabolite's water solubility, thereby facilitating excretion into either the urine or bile. Essential for the elimination and detoxification of drugs, xenobiotics and endogenous compounds. Catalyzes the glucuronidation of endogenous estrogen hormones such as estradiol and estrone. Contributes to bile acid (BA) detoxification by catalyzing the glucuronidation of BA substrates, which are natural detergents for dietary lipids absorption. Involved in the glucuronidation of calcidiol, which is the major circulating form of vitamin D3, essential for the regulation of calcium and phosphate homeostasis. Involved in the glucuronidation of the phytochemical ferulic acid at the phenolic or the carboxylic acid group. Involved in the glucuronidation of the AGTR1 angiotensin receptor antagonists losartan, candesartan and zolarsartan, which can inhibit the effect of angiotensin II. Its function is as follows. Lacks UDP-glucuronosyltransferase (UGT) activity but acts as a negative regulator of isoform 1. In Homo sapiens (Human), this protein is UDP-glucuronosyltransferase 1A3.